A 134-amino-acid polypeptide reads, in one-letter code: Protein NrdI (134 aa).

Belongs to the NrdI family.

Its function is as follows. Probably involved in ribonucleotide reductase function. In Yersinia enterocolitica serotype O:8 / biotype 1B (strain NCTC 13174 / 8081), this protein is Protein NrdI.